Consider the following 100-residue polypeptide: Integration host factor subunit alpha (100 aa).

Positions 53 to 72 are disordered; that stretch reads FQLRDKPQRPGRNPKTGEEV.

This sequence belongs to the bacterial histone-like protein family. Heterodimer of an alpha and a beta chain.

Functionally, this protein is one of the two subunits of integration host factor, a specific DNA-binding protein that functions in genetic recombination as well as in transcriptional and translational control. The sequence is that of Integration host factor subunit alpha from Neisseria meningitidis serogroup C (strain 053442).